Reading from the N-terminus, the 130-residue chain is Large ribosomal subunit protein bL17 (130 aa).

The protein belongs to the bacterial ribosomal protein bL17 family. Part of the 50S ribosomal subunit. Contacts protein L32.

This chain is Large ribosomal subunit protein bL17, found in Shewanella loihica (strain ATCC BAA-1088 / PV-4).